The chain runs to 668 residues: Hemocyanin subunit D (668 aa).

Residues 1–22 (MDTRVLRLTLALVALSGVLADS) form the signal peptide. Cu cation contacts are provided by His206, His210, and His236. N-linked (GlcNAc...) asparagine glycosylation is present at Asn322. Residues His357, His361, and His397 each contribute to the Cu cation site. Cys567 and Cys614 are disulfide-bonded.

It belongs to the tyrosinase family. Hemocyanin subfamily. 36-chain polymer consisting of 6 hexamers, each of which includes 4 different chains, A, B, C and D. Hemolymph.

The protein localises to the secreted. The protein resides in the extracellular space. In terms of biological role, hemocyanins are copper-containing oxygen carriers occurring freely dissolved in the hemolymph of many mollusks and arthropods. This Scutigera coleoptrata (House centipede) protein is Hemocyanin subunit D (HCD).